We begin with the raw amino-acid sequence, 197 residues long: Imidazoleglycerol-phosphate dehydratase (197 aa).

It belongs to the imidazoleglycerol-phosphate dehydratase family.

The protein localises to the cytoplasm. The catalysed reaction is D-erythro-1-(imidazol-4-yl)glycerol 3-phosphate = 3-(imidazol-4-yl)-2-oxopropyl phosphate + H2O. It functions in the pathway amino-acid biosynthesis; L-histidine biosynthesis; L-histidine from 5-phospho-alpha-D-ribose 1-diphosphate: step 6/9. This chain is Imidazoleglycerol-phosphate dehydratase, found in Pseudomonas fluorescens (strain SBW25).